The primary structure comprises 419 residues: eIF5-mimic protein 1 (419 aa).

Residues 1-22 form a disordered region; the sequence is MNKHQKPVLTGQRFKTRKRDEK. Lys117 bears the N6-acetyllysine mark. Residues 248-415 form the W2 domain; sequence VQQSLGTRKE…QNAEEESESE (168 aa). 3 positions are modified to phosphoserine: Ser412, Ser414, and Ser419.

This sequence belongs to the BZW family. As to quaternary structure, interacts with EIF3E, EIF2S2 and EIF3C.

Its subcellular location is the cytoplasm. Functionally, translation initiation regulator which represses non-AUG initiated translation and repeat-associated non-AUG (RAN) initiated translation by acting as a competitive inhibitor of eukaryotic translation initiation factor 5 (EIF5) function. Increases the accuracy of translation initiation by impeding EIF5-dependent translation from non-AUG codons by competing with it for interaction with EIF2S2 within the 43S pre-initiation complex (PIC) in an EIF3C-binding dependent manner. The polypeptide is eIF5-mimic protein 1 (Bzw2) (Mus musculus (Mouse)).